The primary structure comprises 819 residues: FYN-binding protein 1 (819 aa).

Positions 1–45 (MAKFNTGSNPTEEAATSSRPFKVAGQSSPSGIQSRKNLFDNQGNA) are enriched in polar residues. The disordered stretch occupies residues 1-490 (MAKFNTGSNP…REKKEQELKK (490 aa)). Residue lysine 3 is modified to N6-acetyllysine. 2 positions are modified to phosphoserine: serine 28 and serine 46. A compositionally biased stretch (basic and acidic residues) spans 69–79 (TYEEKPEKEPK). The segment covering 150-160 (GPKPGPAPPVP) has biased composition (pro residues). Residue serine 222 is modified to Phosphoserine. 2 stretches are compositionally biased toward basic and acidic residues: residues 237–248 (PPKEDPEDKDHG) and 273–285 (NFEE…KTDL). Serine 318 is modified (phosphoserine). Pro residues-rich tracts occupy residues 342-351 (GPPPPKPNRP) and 380-412 (LPPP…PRNI). Acidic residues predominate over residues 439–453 (LEEEQESEGETYEDI). Position 445 is a phosphoserine (serine 445). The stretch at 448-495 (ETYEDIDSSKERDKKREKEEKKRLELERKEQKEREKKEQELKKKFKLT) forms a coiled coil. The span at 454 to 489 (DSSKERDKKREKEEKKRLELERKEQKEREKKEQELK) shows a compositional bias: basic and acidic residues. The Nuclear localization signal motif lies at 479–493 (KEREKKEQELKKKFK). Residues 499–560 (QVIHHAKACC…KTTAVEIDYD (62 aa)) enclose the SH3 1 domain. Tyrosine 559 is modified (phosphotyrosine). Phosphoserine is present on residues serine 561 and serine 568. Residues 584–587 (YDDV) carry the SH2-binding; to LCP2 motif. Disordered regions lie at residues 589-635 (EQDA…DEKT) and 649-728 (KDDR…EKEE). A compositionally biased stretch (acidic residues) spans 610 to 626 (TDDEIYDGIEEEDDDDG). Positions 615 to 618 (YDGI) match the SH2-binding; to FYN motif. Residues 649 to 664 (KDDRKKSIREKPKVSE) are compositionally biased toward basic and acidic residues. A compositionally biased stretch (polar residues) spans 668–677 (NEGSSLPSQH). Acidic residues predominate over residues 682-692 (VGEEVYDDVDA). Tyrosine 687 carries the post-translational modification Phosphotyrosine. The short motif at 710 to 736 (RAKTEEKDPKKLKKQEKEEKDLRKKFK) is the Nuclear localization signal element. The span at 711 to 728 (AKTEEKDPKKLKKQEKEE) shows a compositional bias: basic and acidic residues. The region spanning 736-804 (KYDGEIRVLY…LRSYLVDNDG (69 aa)) is the SH3 2 domain.

In terms of assembly, part of a complex consisting of SKAP2, FYB1 and PTPNS1. Part of a complex consisting of SKAP2, FYB1 and PIRB. Part of a complex consisting of SKAP1, FYB1 and CLNK. Interacts with CLNK (via its SH2 domain); this interaction allows SKAP1 and FYB1 to recruit FYN to the complex, thus promoting the phosphorylation of CLNK by FYN. Interacts with FYN. Interacts with LCP2. Interacts with SKAP1. Interacts with SKAP2. Interacts with FASLG. Interacts with EVL. Interacts with TMEM47. Interacts with LCK. T-cell receptor ligation leads to increased tyrosine phosphorylation. Expressed in hematopoietic tissues such as myeloid and T-cells, spleen and thymus. Not expressed in B-cells, nor in non-lymphoid tissues. FYB-130 is preferentially expressed in mature T-cells compared to FYB-120, whereas thymocytes showed a greater relative amount of FYB-120. Expressed in podocytes.

Its subcellular location is the cytoplasm. The protein localises to the nucleus. It is found in the cell junction. In terms of biological role, acts as an adapter protein of the FYN and LCP2 signaling cascades in T-cells. May play a role in linking T-cell signaling to remodeling of the actin cytoskeleton. Modulates the expression of IL2. Involved in platelet activation. Prevents the degradation of SKAP1 and SKAP2. May be involved in high affinity immunoglobulin epsilon receptor signaling in mast cells. This Mus musculus (Mouse) protein is FYN-binding protein 1 (Fyb1).